The following is a 200-amino-acid chain: Systemin (200 aa).

Residues 1 to 33 (MGTPSYDIKNKGDDMQEEPKVKLHHEKGGDEKE) are disordered. 2 consecutive propeptides follow at residues 1–178 (MGTP…REDL) and 197–200 (NNKL). A 1; truncated repeat occupies 3 to 8 (TPSYDI). Residues 8–33 (IKNKGDDMQEEPKVKLHHEKGGDEKE) are compositionally biased toward basic and acidic residues. Repeat copies occupy residues 37-45 (EKETPSQDI), 80-88 (EKETISQYI), 117-125 (EKETPSQDI), and 145-153 (DKETPSQDI). Disordered stretches follow at residues 106 to 159 (EEEE…MEGE) and 178 to 200 (LAVQ…NNKL). Basic and acidic residues-rich tracts occupy residues 111-140 (EKEK…KVEH) and 146-158 (KETP…KMEG).

As to expression, all organs except the roots. Transported out of wounds to distal tissues.

It is found in the cytoplasm. Functionally, activates a lipid-based signal transduction pathway in which linolenic acid is converted to jasmonic acid, a potent activator of defense gene transcription, including proteinase inhibitor. The polypeptide is Systemin (Solanum lycopersicum (Tomato)).